The following is a 247-amino-acid chain: Uridylate kinase (247 aa).

15-18 is a binding site for ATP; it reads KLSG. The tract at residues 23–28 is involved in allosteric activation by GTP; it reads GDEGFG. Glycine 57 lines the UMP pocket. Residues glycine 58 and arginine 62 each coordinate ATP. UMP is bound by residues aspartate 77 and 138–145; that span reads TGNPFFTT. The ATP site is built by threonine 165, tyrosine 171, and aspartate 174.

The protein belongs to the UMP kinase family. In terms of assembly, homohexamer.

The protein localises to the cytoplasm. It catalyses the reaction UMP + ATP = UDP + ADP. It functions in the pathway pyrimidine metabolism; CTP biosynthesis via de novo pathway; UDP from UMP (UMPK route): step 1/1. Its activity is regulated as follows. Allosterically activated by GTP. Inhibited by UTP. Catalyzes the reversible phosphorylation of UMP to UDP. In Colwellia psychrerythraea (strain 34H / ATCC BAA-681) (Vibrio psychroerythus), this protein is Uridylate kinase.